Here is a 480-residue protein sequence, read N- to C-terminus: MSGILLSNPVNAIPLMNRIRKIHFVGIGGTGMCGIAEILAHEGYCITGSDIVYSSTTRHLFELGVKIFIGHKYSNINNANVIVVSSAIHPNNPEILAAKQARIPVIKRAEMLSELMRFRHGIAISGTHGKTTTTTMIVNIYTAAGLDPTFINGGIVKSEGVHARLGYSRYLIVEADESDNSFLHLHPMVEVITNIDTDHIHEYQGNFEYLKKAFIDFLHNLPFYGYAIVCIDDPVICEILPKIKRKIITYGFNKNANLHIFNYRQHIEKSSFTVSRFNQTKLQVTLNAPGCHNALNATAAIAVATEEGISDKIILKTMLDFQGTHRRFENLGYYSLNKINDQTGEILLIDDYGHHPAELHATIVAIRTGWPDRRLVMVFQPHRYTRIKELYYDFIDVLSNVDILLILHVYSAGEPPILGADSQSLCHAIREFGKINPTFISNTKMLSGALFRLLRNNDLLLIQGAGTIGEVVRRLIVKND.

Residue 126–132 coordinates ATP; it reads GTHGKTT.

This sequence belongs to the MurCDEF family.

The protein localises to the cytoplasm. The enzyme catalyses UDP-N-acetyl-alpha-D-muramate + L-alanine + ATP = UDP-N-acetyl-alpha-D-muramoyl-L-alanine + ADP + phosphate + H(+). Its pathway is cell wall biogenesis; peptidoglycan biosynthesis. Functionally, cell wall formation. This chain is UDP-N-acetylmuramate--L-alanine ligase, found in Blochmanniella pennsylvanica (strain BPEN).